The sequence spans 67 residues: Beta-defensin 103A (67 aa).

The N-terminal stretch at 1–22 (MRIHFLLFALLFLFLMPVPGNG) is a signal peptide. Disulfide bonds link cysteine 33-cysteine 62, cysteine 40-cysteine 55, and cysteine 45-cysteine 63.

This sequence belongs to the beta-defensin family.

The protein resides in the secreted. Functionally, exhibits antimicrobial activity against Gram-positive and Gram-negative bacteria. The protein is Beta-defensin 103A (DEFB103A) of Equus caballus (Horse).